Consider the following 121-residue polypeptide: Protein opa (121 aa).

The protein belongs to the opacity porin family.

The polypeptide is Protein opa (opa) (Haemophilus influenzae (strain ATCC 51907 / DSM 11121 / KW20 / Rd)).